The following is a 331-amino-acid chain: Ketol-acid reductoisomerase (NADP(+)) (331 aa).

In terms of domain architecture, KARI N-terminal Rossmann spans 4-183; that stretch reads ATIYYDDDAE…GCTRAGVVET (180 aa). NADP(+) contacts are provided by residues 27-30, Arg50, Ser53, Ser55, and 85-88; these read YGSQ and DTVQ. The active site involves His109. Gly135 contributes to the NADP(+) binding site. The KARI C-terminal knotted domain occupies 184–329; that stretch reads TFREETETDL…EDLRALFAWG (146 aa). Positions 192, 196, 228, and 232 each coordinate Mg(2+). Ser253 serves as a coordination point for substrate.

Belongs to the ketol-acid reductoisomerase family. Requires Mg(2+) as cofactor.

It catalyses the reaction (2R)-2,3-dihydroxy-3-methylbutanoate + NADP(+) = (2S)-2-acetolactate + NADPH + H(+). The enzyme catalyses (2R,3R)-2,3-dihydroxy-3-methylpentanoate + NADP(+) = (S)-2-ethyl-2-hydroxy-3-oxobutanoate + NADPH + H(+). It functions in the pathway amino-acid biosynthesis; L-isoleucine biosynthesis; L-isoleucine from 2-oxobutanoate: step 2/4. Its pathway is amino-acid biosynthesis; L-valine biosynthesis; L-valine from pyruvate: step 2/4. In terms of biological role, involved in the biosynthesis of branched-chain amino acids (BCAA). Catalyzes an alkyl-migration followed by a ketol-acid reduction of (S)-2-acetolactate (S2AL) to yield (R)-2,3-dihydroxy-isovalerate. In the isomerase reaction, S2AL is rearranged via a Mg-dependent methyl migration to produce 3-hydroxy-3-methyl-2-ketobutyrate (HMKB). In the reductase reaction, this 2-ketoacid undergoes a metal-dependent reduction by NADPH to yield (R)-2,3-dihydroxy-isovalerate. This is Ketol-acid reductoisomerase (NADP(+)) from Natronomonas pharaonis (strain ATCC 35678 / DSM 2160 / CIP 103997 / JCM 8858 / NBRC 14720 / NCIMB 2260 / Gabara) (Halobacterium pharaonis).